A 107-amino-acid polypeptide reads, in one-letter code: MKGGLGNIMKQAQQLQERLQKTQEELAQVEVQGHAGGNLVEVTMTCRHDVRRVRIDPSLLTDGDQEMLEDLVAAAINDAVRTAEKVSAERMSEVTGGMNIPGMNLPF.

The protein belongs to the YbaB/EbfC family. In terms of assembly, homodimer.

The protein localises to the cytoplasm. It localises to the nucleoid. Binds to DNA and alters its conformation. May be involved in regulation of gene expression, nucleoid organization and DNA protection. The protein is Nucleoid-associated protein Lferr_1592 of Acidithiobacillus ferrooxidans (strain ATCC 53993 / BNL-5-31) (Leptospirillum ferrooxidans (ATCC 53993)).